Reading from the N-terminus, the 292-residue chain is UDP-N-acetylenolpyruvoylglucosamine reductase (292 aa).

Residues 27 to 188 enclose the FAD-binding PCMH-type domain; that stretch reads KIGGPVRLFI…LRVGFRIIKG (162 aa). Arg-166 is an active-site residue. The active-site Proton donor is Ser-217. Residue Glu-288 is part of the active site.

The protein belongs to the MurB family. FAD is required as a cofactor.

The protein resides in the cytoplasm. The catalysed reaction is UDP-N-acetyl-alpha-D-muramate + NADP(+) = UDP-N-acetyl-3-O-(1-carboxyvinyl)-alpha-D-glucosamine + NADPH + H(+). Its pathway is cell wall biogenesis; peptidoglycan biosynthesis. In terms of biological role, cell wall formation. The polypeptide is UDP-N-acetylenolpyruvoylglucosamine reductase (Thermosipho melanesiensis (strain DSM 12029 / CIP 104789 / BI429)).